A 413-amino-acid polypeptide reads, in one-letter code: Sensor protein SphS (413 aa).

The Histidine kinase domain occupies aspartate 176 to proline 398. Histidine 179 carries the post-translational modification Phosphohistidine; by autocatalysis.

The protein localises to the cytoplasm. It carries out the reaction ATP + protein L-histidine = ADP + protein N-phospho-L-histidine.. Functionally, member of the two-component regulatory system SphR/SphS. Sensory kinase. Is involved in inducible production of alkaline phosphatase in response to phosphate limitation as it is directly involved in the regulation of phoA transcription in response to phosphate limitation. SphS functions as a protein kinase that phosphorylates SphR. The sequence is that of Sensor protein SphS (sphS) from Synechococcus elongatus (strain ATCC 33912 / PCC 7942 / FACHB-805) (Anacystis nidulans R2).